The primary structure comprises 493 residues: Glutamate--tRNA ligase (493 aa).

The 'HIGH' region motif lies at Pro-10–Thr-20. The 'KMSKS' region motif lies at Lys-251 to Arg-255. Lys-254 is an ATP binding site.

This sequence belongs to the class-I aminoacyl-tRNA synthetase family. Glutamate--tRNA ligase type 1 subfamily. Monomer.

The protein localises to the cytoplasm. The enzyme catalyses tRNA(Glu) + L-glutamate + ATP = L-glutamyl-tRNA(Glu) + AMP + diphosphate. In terms of biological role, catalyzes the attachment of glutamate to tRNA(Glu) in a two-step reaction: glutamate is first activated by ATP to form Glu-AMP and then transferred to the acceptor end of tRNA(Glu). The protein is Glutamate--tRNA ligase of Pseudomonas putida (strain GB-1).